We begin with the raw amino-acid sequence, 355 residues long: Capsular polysaccharide biosynthesis glycosyltransferase CapH (355 aa).

The protein belongs to the glycosyltransferase group 1 family. Glycosyltransferase 4 subfamily.

It functions in the pathway capsule biogenesis; capsule polysaccharide biosynthesis. Functionally, required for the biosynthesis of type 1 capsular polysaccharide. The protein is Capsular polysaccharide biosynthesis glycosyltransferase CapH (capH) of Staphylococcus aureus.